Reading from the N-terminus, the 108-residue chain is Insulin (108 aa).

Residues 1–21 (MAVWLQAGALLVLLVVSSVST) form the signal peptide. 3 cysteine pairs are disulfide-bonded: Cys-30–Cys-94, Cys-42–Cys-107, and Cys-93–Cys-98. Positions 54–84 (DVEPLLGFLPPKSAQETEVADFAFKDHAELI) are cleaved as a propeptide — c peptide.

Belongs to the insulin family. As to quaternary structure, heterodimer of a B chain and an A chain linked by two disulfide bonds.

The protein resides in the secreted. In terms of biological role, insulin decreases blood glucose concentration. It increases cell permeability to monosaccharides, amino acids and fatty acids. It accelerates glycolysis, the pentose phosphate cycle, and glycogen synthesis in liver. This Danio rerio (Zebrafish) protein is Insulin (ins).